The following is a 564-amino-acid chain: Septation ring formation regulator EzrA (564 aa).

At 1 to 2 (ME) the chain is on the extracellular side. A helical transmembrane segment spans residues 3 to 21 (FVIGLLALFLILFATGYLF). The Cytoplasmic segment spans residues 22-564 (RKNIYKEIDR…RLEADAKQPE (543 aa)). Coiled coils occupy residues 99–159 (QKSK…AYSH), 243–281 (KGYK…EAAA), and 310–498 (KVPE…VELV).

It belongs to the EzrA family.

It localises to the cell membrane. In terms of biological role, negative regulator of FtsZ ring formation; modulates the frequency and position of FtsZ ring formation. Inhibits FtsZ ring formation at polar sites. Interacts either with FtsZ or with one of its binding partners to promote depolymerization. In Bacillus licheniformis (strain ATCC 14580 / DSM 13 / JCM 2505 / CCUG 7422 / NBRC 12200 / NCIMB 9375 / NCTC 10341 / NRRL NRS-1264 / Gibson 46), this protein is Septation ring formation regulator EzrA.